The sequence spans 268 residues: MERYENLFAQLNDRREGAFVPFVTLGDPGIEQSLKIIDTLIDAGADALELGVPFSDPLADGPTIQNANLRAFAAGVTPAQCFEMLALIREKHPTIPIGLLMYANLVFNNGIDAFYARCEQVGVDSVLVADVPVEESAPFRQAALRHNIAPIFICPPNADDDLLRQVASYGRGYTYLLSRSGVTGAENRGALPLHHLIEKLKEYHAAPALQGFGISSPEQVSAAVRAGAAGAISGSAIVKIIEKNLASPEQMLAELRSFVSAMKAASRA.

Catalysis depends on proton acceptor residues Glu-49 and Asp-60.

Belongs to the TrpA family. Tetramer of two alpha and two beta chains.

The catalysed reaction is (1S,2R)-1-C-(indol-3-yl)glycerol 3-phosphate + L-serine = D-glyceraldehyde 3-phosphate + L-tryptophan + H2O. The protein operates within amino-acid biosynthesis; L-tryptophan biosynthesis; L-tryptophan from chorismate: step 5/5. Its function is as follows. The alpha subunit is responsible for the aldol cleavage of indoleglycerol phosphate to indole and glyceraldehyde 3-phosphate. In Salmonella agona (strain SL483), this protein is Tryptophan synthase alpha chain.